A 437-amino-acid polypeptide reads, in one-letter code: GTPase Obg (437 aa).

The Obg domain maps to 2–160 (SMFLDTAKIS…RQLELELKIL (159 aa)). The OBG-type G domain occupies 161 to 338 (ADVGLVGFPS…LLEATAELLA (178 aa)). GTP contacts are provided by residues 167–174 (GFPSVGKS), 192–196 (FTTIV), 214–217 (DLPG), 284–287 (NKMD), and 319–321 (SSL). Mg(2+)-binding residues include S174 and T194. One can recognise an OCT domain in the interval 359–437 (GFAEAEKDFE…IGKFEFEFVD (79 aa)).

This sequence belongs to the TRAFAC class OBG-HflX-like GTPase superfamily. OBG GTPase family. Monomer. Mg(2+) serves as cofactor.

It is found in the cytoplasm. In terms of biological role, an essential GTPase which binds GTP, GDP and possibly (p)ppGpp with moderate affinity, with high nucleotide exchange rates and a fairly low GTP hydrolysis rate. Plays a role in control of the cell cycle, stress response, ribosome biogenesis and in those bacteria that undergo differentiation, in morphogenesis control. This chain is GTPase Obg, found in Streptococcus pyogenes serotype M18 (strain MGAS8232).